Reading from the N-terminus, the 408-residue chain is Tripartite motif-containing protein 59 (408 aa).

Residues 10 to 60 (CSICYSLFEDPRVLPCSHTFCRSCLEGVIQLSSNFSIWRPLRVPLKCPNCR) form an RING-type zinc finger. A B box-type zinc finger spans residues 92–134 (SDVATCSEHYRQPLNVYCLLDKKLVCGHCLTIGKHNGHPIDDL). The Zn(2+) site is built by cysteine 97, histidine 100, cysteine 120, and histidine 126. A coiled-coil region spans residues 163–247 (LIEKLKEQKA…LNTSIQKEES (85 aa)). A helical membrane pass occupies residues 333-353 (ANPLSVTFIFTVIIAIAVLSF).

Belongs to the TRIM/RBCC family. In terms of assembly, interacts with ECSIT.

Its subcellular location is the endoplasmic reticulum membrane. Functionally, may serve as a multifunctional regulator for innate immune signaling pathways. The chain is Tripartite motif-containing protein 59 (TRIM59) from Gallus gallus (Chicken).